Reading from the N-terminus, the 1198-residue chain is DNA polymerase (1198 aa).

Disordered stretches follow at residues 1 to 87, 179 to 199, and 904 to 930; these read MALV…PRGT, LEQP…PNPP, and QLAL…PPSG. Composition is skewed to low complexity over residues 30–40 and 57–68; these read QQPTRAAPAPA and APPTSGGSPASP.

It belongs to the DNA polymerase type-B family. In terms of assembly, heterodimer with the terminal protein; this heterodimer binds to bp 9 to 18 of the genome. Forms a complex with viral pTP, DBP and hosts NFIA and POU2F1/OCT1 for initiation of replication.

Its subcellular location is the host nucleus. It catalyses the reaction DNA(n) + a 2'-deoxyribonucleoside 5'-triphosphate = DNA(n+1) + diphosphate. In terms of biological role, eukaryotic-type DNA polymerase involved in viral genomic replication. DNA synthesis is protein primed, and acts in a strand displacement replication. Assembles in complex with viral pTP, DBP, host NFIA and host POU2F1/OCT1 on viral origin of replication. The polymerase covalently transfers dCMP onto pTP, thereby initiating complementary strand synthesis. This chain is DNA polymerase, found in Homo sapiens (Human).